The following is a 337-amino-acid chain: MSGMGDGYVGTAQDAVRIRRLQKQREAERKKIQELKSKSASGNDQSGLLQFGTSSCEILDTAFKKETVGLVTREEYVEKRVNIRNKFEEEEKEKLQKLQQEEEELQLEKRNKKRKIKGSSRLSFAEDFENGSDEDDGENKSSGTGNLRCGKLGKDPSVETNFLPDSEREAEEQAERERLKKQWLREQEQIKNEPLEITYSYWDGTGHRRVIQVRKGDPIGNFLRAVQQQLAPDFREIRTASVENLLYVKEDLIIPHQHSFYELIINKARGKSGPLFHFDVHEDVRTIADATIEKDESHAGKVVERHWYEKNKHIFPASRWEIYDPTKKWERYTVHGD.

Serine 2 is subject to N-acetylserine. 2 coiled-coil regions span residues 13–41 (QDAVRIRRLQKQREAERKKIQELKSKSAS) and 72–121 (TREE…GSSR). Over residues 23–37 (KQREAERKKIQELKS) the composition is skewed to basic and acidic residues. The segment at 23-47 (KQREAERKKIQELKSKSASGNDQSG) is disordered. Over residues 38–47 (KSASGNDQSG) the composition is skewed to polar residues. The interval 125–174 (AEDFENGSDEDDGENKSSGTGNLRCGKLGKDPSVETNFLPDSEREAEEQA) is disordered. Over residues 126 to 137 (EDFENGSDEDDG) the composition is skewed to acidic residues. A Phosphoserine modification is found at serine 132. Over residues 165–174 (DSEREAEEQA) the composition is skewed to basic and acidic residues.

It belongs to the FAM50 family. In terms of tissue distribution, expressed in leaves stems, flowers, roots, trichomes and hypocotyls.

It is found in the nucleus. Involved in light regulation of the circadian clock and photomorphogenesis. May play a global role in coordinating growth in response to the light environment. Acts as a light quality sensor directing both negative and positive transcriptional regulation. Inhibits growth in red light but promote growth in blue light. Inhibits clock gene expression in diurnal cycles. Plays no role in the control of flowering time. This is Protein XAP5 CIRCADIAN TIMEKEEPER (XCT) from Arabidopsis thaliana (Mouse-ear cress).